A 475-amino-acid chain; its full sequence is Ribulose bisphosphate carboxylase large chain (475 aa).

The propeptide occupies 1-2 (MS). P3 is subject to N-acetylproline. K14 carries the post-translational modification N6,N6,N6-trimethyllysine. Substrate-binding residues include N123 and T173. K175 (proton acceptor) is an active-site residue. Position 177 (K177) interacts with substrate. Mg(2+) is bound by residues K201, D203, and E204. K201 carries the N6-carboxylysine modification. H294 acts as the Proton acceptor in catalysis. Residues R295, H327, and S379 each contribute to the substrate site.

It belongs to the RuBisCO large chain family. Type I subfamily. As to quaternary structure, heterohexadecamer of 8 large chains and 8 small chains; disulfide-linked. The disulfide link is formed within the large subunit homodimers. Mg(2+) is required as a cofactor. In terms of processing, the disulfide bond which can form in the large chain dimeric partners within the hexadecamer appears to be associated with oxidative stress and protein turnover.

The protein localises to the plastid. It localises to the chloroplast. The catalysed reaction is 2 (2R)-3-phosphoglycerate + 2 H(+) = D-ribulose 1,5-bisphosphate + CO2 + H2O. The enzyme catalyses D-ribulose 1,5-bisphosphate + O2 = 2-phosphoglycolate + (2R)-3-phosphoglycerate + 2 H(+). Functionally, ruBisCO catalyzes two reactions: the carboxylation of D-ribulose 1,5-bisphosphate, the primary event in carbon dioxide fixation, as well as the oxidative fragmentation of the pentose substrate in the photorespiration process. Both reactions occur simultaneously and in competition at the same active site. The protein is Ribulose bisphosphate carboxylase large chain of Pinus longaeva (Great Basin bristlecone pine).